Consider the following 734-residue polypeptide: MNSKVSSPTLLEALSSDFLACKICLEQLHTPKTLPCLHTYCQDCLAQLDIGGQVRCPECREIVPVPAEGVAAFKTNFFVNGLLDLVKARAPGDVHSGKPTCALCPLVGGKSSGGPATARCLDCADDLCQACADGHRCSRQTHKHRVVDLVGYRAGWYDEEARERQASQCPQHPGEALCFLCQPCSQLLCKDCRLGPHIDHPCLPLAEAVRSRKPGLEELLAGVDSNLVELEATRVAEKEALALLREQAASVGTQVEEAAERILKSLLAQKQEVLGQLRALVEAAEEATRERLTKIERQEQVAKAAAAFARRVLSLGLEAEILSLEGAITQRLRQLQDAPWTSGPTRCVLPQLELHPGLEDKNCHLLRLIFEEPKQSPKDSGKGGAGTQGGDEAQGQGDDRTKIGKQGGAQPLTPKEGKDQNPQEDDGVFIERGNRPNKKKKCKGRGKSVSREPSPILRPNLEGSGLLPRPVFSWSFPTRMPGDKRSPRITGLCPYGPQEILVADEQNRVLKRFSLNGDYKGTVQVPEGCSPCSVAALQNAVAFSANAKLYLVSPDGEIQWRRSLSLTQSSHAVAAMPCGDRVAVSVAGHVEVYKKDGSLATRFIPGGKASRGQRALVFLTTSPQGNFVGSDWQQNSVVFCDGLGQVIWEYKGPGLHGCQPGSVSVDKKGYIFLTLREVNKVVILDPKGSLLGDFLTAYHGLEKPRVTTMVDGKYLVVSLSNGTIHVFRVRFPDS.

The RING-type zinc-finger motif lies at Cys21–Arg60. 2 B box-type zinc fingers span residues Lys98–Leu149 and Arg164–Leu205. 4 residues coordinate Zn(2+): Cys169, His172, Cys192, and His197. The stretch at Gly215–Lys303 forms a coiled coil. A compositionally biased stretch (basic and acidic residues) spans Glu372–Gly381. Positions Glu372–Gly463 are disordered. Residues Arg435 to Ser448 show a composition bias toward basic residues. Ser454 is subject to Phosphoserine.

Belongs to the TRIM/RBCC family. Interacts with STING1. Interacts with TICAM1.

Its subcellular location is the cytoplasm. It catalyses the reaction S-ubiquitinyl-[E2 ubiquitin-conjugating enzyme]-L-cysteine + [acceptor protein]-L-lysine = [E2 ubiquitin-conjugating enzyme]-L-cysteine + N(6)-ubiquitinyl-[acceptor protein]-L-lysine.. The protein operates within protein modification; protein ubiquitination. Functionally, E3 ubiquitin-protein ligase that plays a key role in innate antiviral immunity by mediating ubiquitination of CGAS and STING1. In response to pathogen- and host-derived double-stranded DNA (dsDNA), targets STING1 to 'Lys-63'-linked ubiquitination, thereby promoting its homodimerization, a step required for the production of type I interferon IFN-beta. Also mediates monoubiquitination of CGAS, thereby promoting CGAS oligomerization and subsequent activation. Independently of its E3 ubiquitin ligase activity, positive regulator of TLR3 signaling. Potentiates extracellular double stranded RNA (dsRNA)-induced expression of IFNB1 and interferon-stimulated genes ISG15, IFIT1/ISG56, CXCL10, OASL and CCL5/RANTES. The chain is E3 ubiquitin-protein ligase TRIM56 from Mus musculus (Mouse).